Reading from the N-terminus, the 671-residue chain is DNA ligase (671 aa).

NAD(+)-binding positions include 32 to 36 (DAEYD), 81 to 82 (SL), and Glu-113. Lys-115 serves as the catalytic N6-AMP-lysine intermediate. Arg-136, Glu-173, Lys-290, and Lys-314 together coordinate NAD(+). Cys-408, Cys-411, Cys-426, and Cys-432 together coordinate Zn(2+). One can recognise a BRCT domain in the interval 593 to 671 (EIDSPFAGKT…EAEMIRLLDA (79 aa)).

It belongs to the NAD-dependent DNA ligase family. LigA subfamily. The cofactor is Mg(2+). Requires Mn(2+) as cofactor.

It catalyses the reaction NAD(+) + (deoxyribonucleotide)n-3'-hydroxyl + 5'-phospho-(deoxyribonucleotide)m = (deoxyribonucleotide)n+m + AMP + beta-nicotinamide D-nucleotide.. Its function is as follows. DNA ligase that catalyzes the formation of phosphodiester linkages between 5'-phosphoryl and 3'-hydroxyl groups in double-stranded DNA using NAD as a coenzyme and as the energy source for the reaction. It is essential for DNA replication and repair of damaged DNA. This is DNA ligase from Salmonella schwarzengrund (strain CVM19633).